Here is a 593-residue protein sequence, read N- to C-terminus: Translation initiation factor rli1 (593 aa).

4Fe-4S ferredoxin-type domains follow at residues 7–39 (RIAIVSEDKCRPKKCRQECRRSCPVVRTGKLCI) and 46–75 (RIAFISETLCIGCGICVKKCPFGAINIINL). ABC transporter domains lie at 70-318 (INII…FLDG) and 334-556 (FRLA…LKNL). Residues 110–117 (GTNGIGKS) and 382–389 (GENGTGKT) each bind ATP.

It belongs to the ABC transporter superfamily. In terms of assembly, component of the multifactor complex (MFC). The complex associates with pre-initiation complexes.

It is found in the cytoplasm. The protein resides in the nucleus. Component of the multifactor complex (MFC) involved in translation initiation. Required for the binding of MFC to the 40S ribosome. Required for the processing and nuclear export of the 60S and 40S ribosomal subunits. The protein is Translation initiation factor rli1 (rli1) of Schizosaccharomyces pombe (strain 972 / ATCC 24843) (Fission yeast).